Here is a 54-residue protein sequence, read N- to C-terminus: Protein hunchback (54 aa).

3 C2H2-type zinc fingers span residues 1–3, 9–31, and 37–54; these read RKH, FQCD…RKFH, and YRCA…SFKL.

It belongs to the hunchback C2H2-type zinc-finger protein family.

The protein localises to the nucleus. Its function is as follows. Gap class segmentation protein that controls development of head structures. This is Protein hunchback (hb) from Calliphora vicina (Blue blowfly).